Consider the following 265-residue polypeptide: Hydroxyethylthiazole kinase 2 (265 aa).

Methionine 39 provides a ligand contact to substrate. Residues lysine 115 and threonine 168 each contribute to the ATP site. Glycine 195 serves as a coordination point for substrate.

It belongs to the Thz kinase family. The cofactor is Mg(2+).

The enzyme catalyses 5-(2-hydroxyethyl)-4-methylthiazole + ATP = 4-methyl-5-(2-phosphooxyethyl)-thiazole + ADP + H(+). It functions in the pathway cofactor biosynthesis; thiamine diphosphate biosynthesis; 4-methyl-5-(2-phosphoethyl)-thiazole from 5-(2-hydroxyethyl)-4-methylthiazole: step 1/1. Functionally, catalyzes the phosphorylation of the hydroxyl group of 4-methyl-5-beta-hydroxyethylthiazole (THZ). The sequence is that of Hydroxyethylthiazole kinase 2 from Clostridium botulinum (strain Kyoto / Type A2).